A 286-amino-acid polypeptide reads, in one-letter code: MVRTLNNCPAPAKLNLFLHVTGRRADGYHLLQSVFQLIDRGDVLHFSVRDDGLIHRSTELAGVPADSDLVVRAARLLQTEAKKQGKTPGADIAIEKKLPMGGGLGGGSSDAATTLLALNHLWQTGLTRAELMALGLQLGADVPFFLFGQNAFAEGIGEALMAVKTPESWFLVIEPGVSVPTQQIFSSLELTRDTKPVKISDFSRAQESFGKNDLQVVAANLFPPIADAIKWLQQFGDARMTGSGACVFCPFKEEQQVDAVLATVPQQWKAWKAKAITHHPLAYLAT.

Lys13 is a catalytic residue. Residue 99–109 (PMGGGLGGGSS) participates in ATP binding. Asp141 is a catalytic residue.

This sequence belongs to the GHMP kinase family. IspE subfamily.

It carries out the reaction 4-CDP-2-C-methyl-D-erythritol + ATP = 4-CDP-2-C-methyl-D-erythritol 2-phosphate + ADP + H(+). Its pathway is isoprenoid biosynthesis; isopentenyl diphosphate biosynthesis via DXP pathway; isopentenyl diphosphate from 1-deoxy-D-xylulose 5-phosphate: step 3/6. Its function is as follows. Catalyzes the phosphorylation of the position 2 hydroxy group of 4-diphosphocytidyl-2C-methyl-D-erythritol. This chain is 4-diphosphocytidyl-2-C-methyl-D-erythritol kinase, found in Herminiimonas arsenicoxydans.